Here is a 383-residue protein sequence, read N- to C-terminus: ATP phosphoribosyltransferase regulatory subunit (383 aa).

The protein belongs to the class-II aminoacyl-tRNA synthetase family. HisZ subfamily. In terms of assembly, heteromultimer composed of HisG and HisZ subunits.

Its subcellular location is the cytoplasm. The protein operates within amino-acid biosynthesis; L-histidine biosynthesis; L-histidine from 5-phospho-alpha-D-ribose 1-diphosphate: step 1/9. Functionally, required for the first step of histidine biosynthesis. May allow the feedback regulation of ATP phosphoribosyltransferase activity by histidine. In Cupriavidus taiwanensis (strain DSM 17343 / BCRC 17206 / CCUG 44338 / CIP 107171 / LMG 19424 / R1) (Ralstonia taiwanensis (strain LMG 19424)), this protein is ATP phosphoribosyltransferase regulatory subunit.